Consider the following 146-residue polypeptide: Large ribosomal subunit protein uL13 (146 aa).

It belongs to the universal ribosomal protein uL13 family. As to quaternary structure, part of the 50S ribosomal subunit.

Functionally, this protein is one of the early assembly proteins of the 50S ribosomal subunit, although it is not seen to bind rRNA by itself. It is important during the early stages of 50S assembly. The sequence is that of Large ribosomal subunit protein uL13 from Spiroplasma citri.